Consider the following 176-residue polypeptide: NAD(P)H-quinone oxidoreductase subunit 6, chloroplastic (176 aa).

5 consecutive transmembrane segments (helical) span residues 10–30 (ILLV…VLLT), 32–52 (PISS…FYIP), 61–81 (AQLL…VMFM), 92–112 (LWTI…FSLI), and 152–172 (FYLP…GAIA).

This sequence belongs to the complex I subunit 6 family. As to quaternary structure, NDH is composed of at least 16 different subunits, 5 of which are encoded in the nucleus.

Its subcellular location is the plastid. The protein resides in the chloroplast thylakoid membrane. The catalysed reaction is a plastoquinone + NADH + (n+1) H(+)(in) = a plastoquinol + NAD(+) + n H(+)(out). The enzyme catalyses a plastoquinone + NADPH + (n+1) H(+)(in) = a plastoquinol + NADP(+) + n H(+)(out). NDH shuttles electrons from NAD(P)H:plastoquinone, via FMN and iron-sulfur (Fe-S) centers, to quinones in the photosynthetic chain and possibly in a chloroplast respiratory chain. The immediate electron acceptor for the enzyme in this species is believed to be plastoquinone. Couples the redox reaction to proton translocation, and thus conserves the redox energy in a proton gradient. The protein is NAD(P)H-quinone oxidoreductase subunit 6, chloroplastic (ndhG) of Chloranthus spicatus (Chulantree).